A 298-amino-acid chain; its full sequence is Small ribosomal subunit biogenesis GTPase RsgA (298 aa).

The 162-residue stretch at 67–228 folds into the CP-type G domain; the sequence is TNELIRPPIC…VADTPGFSSL (162 aa). Position 116–119 (116–119) interacts with GTP; it reads TKMD. At Thr166 the chain carries Phosphothreonine. Residue 171–179 participates in GTP binding; that stretch reads GQSGVGKSS. Zn(2+)-binding residues include Cys252, Cys257, His259, and Cys265.

This sequence belongs to the TRAFAC class YlqF/YawG GTPase family. RsgA subfamily. As to quaternary structure, monomer, but able to form dimers. Associates with 30S ribosomal subunit; a phospho-mimetic mutation increases association. Probably binds 16S rRNA. Zn(2+) serves as cofactor. Post-translationally, in vitro phosphorylated mostly on Thr (with lower signal on Ser) by PrkC in the presence of poly-L-Lys or myelin basic protein, dephosphorylated by PrpC. Most in vitro phosphorylation occurs on Thr-166, in vivo phosphorylation has not been detected, but it might vary during the cell cycle.

It is found in the cytoplasm. Functionally, one of several proteins that assist in the late maturation steps of the functional core of the 30S ribosomal subunit. Helps release RbfA from mature subunits. May play a role in the assembly of ribosomal proteins into the subunit. Circularly permuted GTPase with a low level of activity and slow catalytic turnover, does not act on ATP. GTPase activity is stimulated by the presence of 30S or 70S ribosomes, phosphorylation increases stimulation. Depletion results in increased sensitivity to protein synthesis inhibitors that block the peptide channel or peptidyl transferase center on the ribosome, suggesting this protein functions in conjunction with the ribosome in vivo. Decreasing levels of protein lead to an increase in free 30S and 50S ribosomal subunits and a decrease in assembled 70S ribosomes. Suggested to serve as a specific transcription factor for proteins involved in late stages of peptidoglycan synthesis. This chain is Small ribosomal subunit biogenesis GTPase RsgA, found in Bacillus subtilis (strain 168).